The primary structure comprises 89 residues: MSSIDKTMKFNFSEEPFDQDIKEILMTVHESLQEKGYNPINQIVGYLLSGDPAYIPRYNDARNLIRKVERDEVIEELVKFYLEQNRETK.

This sequence belongs to the UPF0297 family.

This Oceanobacillus iheyensis (strain DSM 14371 / CIP 107618 / JCM 11309 / KCTC 3954 / HTE831) protein is UPF0297 protein OB2008.